The sequence spans 184 residues: Probable type 3 secretion system regulator AscH (184 aa).

A disordered region spans residues 1–25 (MKIEGSDQLGGEQPQRQPLPPESMA).

This sequence belongs to the YopR family.

It is found in the secreted. In terms of biological role, may be involved in the regulation of the assembly of the type III secretion system (T3SS), also called injectisome, which is used to inject bacterial effector proteins into eukaryotic host cells. May control the polymerization of the needle. This chain is Probable type 3 secretion system regulator AscH, found in Aeromonas salmonicida subsp. salmonicida.